The sequence spans 177 residues: Large ribosomal subunit protein uL6 (177 aa).

It belongs to the universal ribosomal protein uL6 family. Part of the 50S ribosomal subunit.

In terms of biological role, this protein binds to the 23S rRNA, and is important in its secondary structure. It is located near the subunit interface in the base of the L7/L12 stalk, and near the tRNA binding site of the peptidyltransferase center. The chain is Large ribosomal subunit protein uL6 from Vibrio parahaemolyticus serotype O3:K6 (strain RIMD 2210633).